The sequence spans 272 residues: NAD kinase (272 aa).

Residue Asp-50 is the Proton acceptor of the active site. Residues 50-51 (DG), 126-127 (NE), Arg-152, Asp-154, 165-170 (TAYNKS), and Ala-189 each bind NAD(+).

The protein belongs to the NAD kinase family. A divalent metal cation serves as cofactor.

The protein localises to the cytoplasm. It carries out the reaction NAD(+) + ATP = ADP + NADP(+) + H(+). In terms of biological role, involved in the regulation of the intracellular balance of NAD and NADP, and is a key enzyme in the biosynthesis of NADP. Catalyzes specifically the phosphorylation on 2'-hydroxyl of the adenosine moiety of NAD to yield NADP. The chain is NAD kinase from Streptococcus pneumoniae (strain Hungary19A-6).